Consider the following 289-residue polypeptide: Shikimate dehydrogenase (NADP(+)) (289 aa).

Residues 22–24 (SRS) and threonine 69 each bind shikimate. Lysine 73 acts as the Proton acceptor in catalysis. Glutamate 85 provides a ligand contact to NADP(+). Residues asparagine 94 and aspartate 109 each coordinate shikimate. NADP(+) contacts are provided by residues 134-138 (GAGGA), 158-163 (NRTLSR), and isoleucine 226. Tyrosine 228 is a shikimate binding site. Glycine 249 lines the NADP(+) pocket.

This sequence belongs to the shikimate dehydrogenase family. Homodimer.

The catalysed reaction is shikimate + NADP(+) = 3-dehydroshikimate + NADPH + H(+). The protein operates within metabolic intermediate biosynthesis; chorismate biosynthesis; chorismate from D-erythrose 4-phosphate and phosphoenolpyruvate: step 4/7. In terms of biological role, involved in the biosynthesis of the chorismate, which leads to the biosynthesis of aromatic amino acids. Catalyzes the reversible NADPH linked reduction of 3-dehydroshikimate (DHSA) to yield shikimate (SA). The polypeptide is Shikimate dehydrogenase (NADP(+)) (Brucella abortus (strain S19)).